A 152-amino-acid chain; its full sequence is Putative toxin MJ1304 (152 aa).

In terms of domain architecture, HEPN spans 15 to 135 (IKRAEEDLEV…EECLKDAENV (121 aa)).

In terms of biological role, putative toxin component of a putative type VII toxin-antitoxin (TA) system. Its cognate antitoxin might be MJ1305. The sequence is that of Putative toxin MJ1304 from Methanocaldococcus jannaschii (strain ATCC 43067 / DSM 2661 / JAL-1 / JCM 10045 / NBRC 100440) (Methanococcus jannaschii).